A 561-amino-acid polypeptide reads, in one-letter code: Laccase-1 (561 aa).

An N-terminal signal peptide occupies residues 1–20 (MKNSFFSSLAKFASLSLAFA). 2 Plastocyanin-like domains span residues 68-185 (VVQN…GPAT) and 191-337 (DLGM…YTGS). N-linked (GlcNAc...) asparagine glycosylation is found at Asn71, Asn87, and Asn114. The Cu cation site is built by His119, His121, His163, and His165. A disulfide bridge connects residues Cys140 and Cys542. N-linked (GlcNAc...) asparagine glycosylation is found at Asn226, Asn284, Asn327, Asn391, and Asn398. The region spanning 396–525 (LLNWTDPTLL…ALQFVESESS (130 aa)) is the Plastocyanin-like 3 domain. Residues His445, His448, His450, His504, Cys505, His506, and His510 each contribute to the Cu cation site.

The protein belongs to the multicopper oxidase family. The cofactor is Cu cation.

The protein localises to the secreted. The catalysed reaction is 4 hydroquinone + O2 = 4 benzosemiquinone + 2 H2O. Functionally, lignin degradation and detoxification of lignin-derived products. This is Laccase-1 (lcc1) from Botryotinia fuckeliana (Noble rot fungus).